The sequence spans 235 residues: Large ribosomal subunit protein uL1 (235 aa).

Belongs to the universal ribosomal protein uL1 family. Part of the 50S ribosomal subunit.

In terms of biological role, binds directly to 23S rRNA. The L1 stalk is quite mobile in the ribosome, and is involved in E site tRNA release. Protein L1 is also a translational repressor protein, it controls the translation of the L11 operon by binding to its mRNA. This chain is Large ribosomal subunit protein uL1, found in Mycobacteroides abscessus (strain ATCC 19977 / DSM 44196 / CCUG 20993 / CIP 104536 / JCM 13569 / NCTC 13031 / TMC 1543 / L948) (Mycobacterium abscessus).